The chain runs to 185 residues: Ribosome-recycling factor (185 aa).

It belongs to the RRF family.

It localises to the cytoplasm. Its function is as follows. Responsible for the release of ribosomes from messenger RNA at the termination of protein biosynthesis. May increase the efficiency of translation by recycling ribosomes from one round of translation to another. In Pseudomonas fluorescens (strain ATCC BAA-477 / NRRL B-23932 / Pf-5), this protein is Ribosome-recycling factor.